Consider the following 149-residue polypeptide: SsrA-binding protein (149 aa).

This sequence belongs to the SmpB family.

The protein localises to the cytoplasm. Functionally, required for rescue of stalled ribosomes mediated by trans-translation. Binds to transfer-messenger RNA (tmRNA), required for stable association of tmRNA with ribosomes. tmRNA and SmpB together mimic tRNA shape, replacing the anticodon stem-loop with SmpB. tmRNA is encoded by the ssrA gene; the 2 termini fold to resemble tRNA(Ala) and it encodes a 'tag peptide', a short internal open reading frame. During trans-translation Ala-aminoacylated tmRNA acts like a tRNA, entering the A-site of stalled ribosomes, displacing the stalled mRNA. The ribosome then switches to translate the ORF on the tmRNA; the nascent peptide is terminated with the 'tag peptide' encoded by the tmRNA and targeted for degradation. The ribosome is freed to recommence translation, which seems to be the essential function of trans-translation. The sequence is that of SsrA-binding protein from Anaplasma phagocytophilum (strain HZ).